Reading from the N-terminus, the 432-residue chain is Gamma-glutamyl phosphate reductase (432 aa).

It belongs to the gamma-glutamyl phosphate reductase family.

It is found in the cytoplasm. It carries out the reaction L-glutamate 5-semialdehyde + phosphate + NADP(+) = L-glutamyl 5-phosphate + NADPH + H(+). The protein operates within amino-acid biosynthesis; L-proline biosynthesis; L-glutamate 5-semialdehyde from L-glutamate: step 2/2. Functionally, catalyzes the NADPH-dependent reduction of L-glutamate 5-phosphate into L-glutamate 5-semialdehyde and phosphate. The product spontaneously undergoes cyclization to form 1-pyrroline-5-carboxylate. The sequence is that of Gamma-glutamyl phosphate reductase from Ruminiclostridium cellulolyticum (strain ATCC 35319 / DSM 5812 / JCM 6584 / H10) (Clostridium cellulolyticum).